The primary structure comprises 572 residues: MRTSQYLFSTLKETPNDAQVVSHQLMLRAGMIRPMASGLYNWLPTGIRVLKKVEKVVREEMNKGGAIEVLMPVVQPAELWEESGRWDQYGPELLRFEDRGNRNFVLGPTHEEVITDLVRREVSSYKQLPLNLYQIQTKFRDEVRPRFGVMRSREFIMKDAYSFHTTQESLQATYDVMYQVYSNIFRRLGLDFRAVQADTGSIGGSASHEFQVLASSGEDDVVFSTESDFAANIELAEAIAIGERQAPTAEMCLVDTPNAKTIAELVEQFNLPIEKTVKTLIVKGADENQPLVALIIRGDHELNEIKAQKHPLVADPLEFADETEIKAKIGAGVGSLGAVNLNIPAIIDRTVALMSDFSCGANIDGKHYFNVNWVRDVAMPEVFDLRNVVEGDPSPDGKGTLQIKRGIEVGHIFQLGKKYSEAMKATVQGEDGKPLVMTMGCYGIGVTRVVASAIEQHHDDRGIIWPSDEIAPFTVAIVPMNMHKSEAVQKYAEELYRTLQSQGVDVIFDDRKERPGVMFADMELIGIPHMVVIGEKNLDNGEIEYKNRRTGEKEMISKDKLLSVLNEKLGNL.

The protein belongs to the class-II aminoacyl-tRNA synthetase family. ProS type 1 subfamily. As to quaternary structure, homodimer.

The protein resides in the cytoplasm. It carries out the reaction tRNA(Pro) + L-proline + ATP = L-prolyl-tRNA(Pro) + AMP + diphosphate. Its function is as follows. Catalyzes the attachment of proline to tRNA(Pro) in a two-step reaction: proline is first activated by ATP to form Pro-AMP and then transferred to the acceptor end of tRNA(Pro). As ProRS can inadvertently accommodate and process non-cognate amino acids such as alanine and cysteine, to avoid such errors it has two additional distinct editing activities against alanine. One activity is designated as 'pretransfer' editing and involves the tRNA(Pro)-independent hydrolysis of activated Ala-AMP. The other activity is designated 'posttransfer' editing and involves deacylation of mischarged Ala-tRNA(Pro). The misacylated Cys-tRNA(Pro) is not edited by ProRS. The sequence is that of Proline--tRNA ligase from Haemophilus influenzae (strain 86-028NP).